A 395-amino-acid polypeptide reads, in one-letter code: GPI-anchor transamidase (395 aa).

Residues 1–27 (MAVTDSLSRAASTLAAVLLLSFGSVAA) form the signal peptide. Residues 28 to 368 (SHIEDQAEQF…PKLKDWHPPG (341 aa)) are Lumenal-facing. 4 residues coordinate Ca(2+): aspartate 79, isoleucine 82, glutamate 118, and aspartate 120. Histidine 164 functions as the Proton donor in the catalytic mechanism. Residue cysteine 206 is the Nucleophile; acyl-thioester intermediate of the active site. Cysteine 206, serine 232, and serine 234 together coordinate a protein. Positions 231 to 236 (DSLSHQ) are autoinhibitory loop. Cysteine 275 and cysteine 280 are oxidised to a cystine. The helical transmembrane segment at 369–385 (GFILGLWALIIMVFFKT) threads the bilayer. The Cytoplasmic portion of the chain corresponds to 386-395 (YGIKHMKFIF).

This sequence belongs to the peptidase C13 family. Heteropentamer. Part of the GPI-anchor transamidase complex, consisting of PIGK, PIGT, PIGS, PIGU and GAA1. Interacts with GPAA1. Interacts with PIGT; this interaction, via a disulfide link, stabilizes the expression of GAA1 and PIGK and links them to PIGS. The disulfide bond between PIGK/GPI8 and PIGT is important for normal enzyme activity.

The protein resides in the endoplasmic reticulum membrane. The protein operates within glycolipid biosynthesis; glycosylphosphatidylinositol-anchor biosynthesis. In the absence of proproteins substrates, exists in an inactive state with a disrupted catalytic site by an autoinhibitory loop. The binding of proprotein substrates, particularly the CSP region, to GPI-T triggers concerted conformational changes that alleviate the inhibition by the autoinhibitory loop. Meanwhile, proprotein residues near the omega- site induce the formation of a catalytic cleft for catalysis, following which the products are released and GPI-T reverts to the inactive state. Catalytic subunit of the glycosylphosphatidylinositol-anchor (GPI-anchor) transamidase (GPI-T) complex that catalyzes the formation of the linkage between a proprotein and a GPI-anchor and participates in GPI anchored protein biosynthesis. Recognizes diverse proproteins at a C-terminal signal peptide (CSP) region that lacks consensus sequence and replaces it with a GPI-anchor via a transamidation reaction. Transamidation catalysis reaction follows a two-phase mechanism. In the acyl-enzyme phase, the carbonyl group of the proproteins's omega-site undergoes a nucleophilic attack forming an enzyme-substrate thioester bond. Followed by a general acid catalysis that allows CSP releasing, regenerating the carbonyl, and forming the acyl-enzyme intermediate. In the GPI-anchor attachment phase, the amino group of the GPI-anchor's ethanolamine phosphate, the one on third mannose (EtNP3), mediates a nucleophilic attack on the carbonyl of the acyl-enzyme intermediate, replacing the CSP, allowing GPI-anchor attachment to the omega-residue, therefore forming the product and freeing the enzyme. This Pongo abelii (Sumatran orangutan) protein is GPI-anchor transamidase.